We begin with the raw amino-acid sequence, 364 residues long: 3-isopropylmalate dehydrogenase (364 aa).

78 to 89 (GPKWGTGAVRPE) lines the NAD(+) pocket. Substrate-binding residues include arginine 96, arginine 106, arginine 135, and aspartate 224. Mg(2+) contacts are provided by aspartate 224, aspartate 249, and aspartate 253. 288–299 (GSAPDLPANKVN) contributes to the NAD(+) binding site.

Belongs to the isocitrate and isopropylmalate dehydrogenases family. In terms of assembly, homodimer. Requires Mg(2+) as cofactor. The cofactor is Mn(2+).

It localises to the cytoplasm. It catalyses the reaction (2R,3S)-3-isopropylmalate + NAD(+) = 4-methyl-2-oxopentanoate + CO2 + NADH. Its pathway is amino-acid biosynthesis; L-leucine biosynthesis; L-leucine from 3-methyl-2-oxobutanoate: step 3/4. In terms of biological role, catalyzes the oxidation of 3-carboxy-2-hydroxy-4-methylpentanoate (3-isopropylmalate) to 3-carboxy-4-methyl-2-oxopentanoate. The product decarboxylates to 4-methyl-2 oxopentanoate. The chain is 3-isopropylmalate dehydrogenase (LEU2) from Wickerhamomyces anomalus (strain ATCC 8168 / CBS 5759 / DSM 6766 / JCM 3585 / IAM 12210 / NCYC 432 / NBRC 10213 / NRRL Y-366 / AJ 5027) (Yeast).